A 515-amino-acid chain; its full sequence is Vesicular acetylcholine transporter (515 aa).

The Cytoplasmic segment spans residues 1-40; the sequence is MGVTMAVGLAKAAMGKISSAIGERSKRISGAMNEPRRKRK. Residues 41–61 traverse the membrane as a helical segment; that stretch reads ILLVIVCIAMLLDNMLYMVIV. Topologically, residues 62–112 are lumenal, vesicle; that stretch reads PIIPNYLETIRTYKLVYITTPSNGTNGSLLNSTQRAVLERNPNANEDIQIG. Asparagine 84, asparagine 87, and asparagine 92 each carry an N-linked (GlcNAc...) asparagine glycan. A helical transmembrane segment spans residues 113 to 133; the sequence is VLFASKAILQLLSNPFTGTFI. Residues 134-139 are Cytoplasmic-facing; that stretch reads DRVGYD. Residues 140-160 form a helical membrane-spanning segment; it reads IPLLIGLTIMFFSTITFAFGE. Residues 161 to 169 lie on the Lumenal, vesicle side of the membrane; sequence SYAVLFAAR. The chain crosses the membrane as a helical span at residues 170-190; that stretch reads SLQGLGSAFADTSGIAMIADK. The Cytoplasmic portion of the chain corresponds to 191–201; the sequence is YTEESERTQAL. The chain crosses the membrane as a helical span at residues 202 to 222; that stretch reads GIALAFISFGSLVAPPFGGVL. Residues 223–229 are Lumenal, vesicle-facing; it reads YQFAGKW. Residues 230–250 form a helical membrane-spanning segment; the sequence is VPFLVLSFVCLLDGILLLMVV. Residues 251-271 are Cytoplasmic-facing; the sequence is TPFASRTRENMLQGTPIYKLM. Residues 272–292 traverse the membrane as a helical segment; that stretch reads IDPYIAVVAGALTTCNIPLAF. Topologically, residues 293-310 are lumenal, vesicle; that stretch reads LEPTISNWMKKTMNASEW. Asparagine 306 carries an N-linked (GlcNAc...) asparagine glycan. The helical transmembrane segment at 311-331 threads the bilayer; the sequence is QMGITWLPAFFPHILGVYITV. The Cytoplasmic portion of the chain corresponds to 332–341; that stretch reads KLAAKYPNYQ. Residues 342-362 traverse the membrane as a helical segment; sequence WFYGAVGLVIIGASSCTIPAC. The Lumenal, vesicle portion of the chain corresponds to 363 to 367; that stretch reads RNFEE. The helical transmembrane segment at 368–388 threads the bilayer; that stretch reads LIIPLCALCFGIALVDTALLP. At 389–404 the chain is on the cytoplasmic side; the sequence is TLAFLVDIRYVSVYGS. The helical transmembrane segment at 405-425 threads the bilayer; the sequence is VYAIADISYSVAYALGPIMAG. Residues 426-432 are Lumenal, vesicle-facing; the sequence is QIVHDLG. A helical transmembrane segment spans residues 433-453; it reads FVQLNLGMGLVNILYAPALLF. The Cytoplasmic portion of the chain corresponds to 454-515; it reads LRNVCQMKPS…VLSDQEGYSE (62 aa). Residues 489–515 are disordered; that stretch reads AAKEPHGSSSGNHSVHAVLSDQEGYSE.

This sequence belongs to the major facilitator superfamily. Vesicular transporter family. In terms of tissue distribution, electric lobe.

The protein localises to the membrane. Its function is as follows. Involved in acetylcholine transport into synaptic vesicles. This is Vesicular acetylcholine transporter from Tetronarce californica (Pacific electric ray).